The primary structure comprises 40 residues: MIEPILLGMVLGFVPVTIAGLLVAAWLQYKQGNPSGLGEK.

Residues 5-25 (ILLGMVLGFVPVTIAGLLVAA) form a helical membrane-spanning segment.

This sequence belongs to the PetG family. In terms of assembly, the 4 large subunits of the cytochrome b6-f complex are cytochrome b6, subunit IV (17 kDa polypeptide, PetD), cytochrome f and the Rieske protein, while the 4 small subunits are PetG, PetL, PetM and PetN. The complex functions as a dimer.

The protein resides in the cell inner membrane. Functionally, component of the cytochrome b6-f complex, which mediates electron transfer between photosystem II (PSII) and photosystem I (PSI), cyclic electron flow around PSI, and state transitions. PetG is required for either the stability or assembly of the cytochrome b6-f complex. This chain is Cytochrome b6-f complex subunit 5, found in Gloeobacter violaceus (strain ATCC 29082 / PCC 7421).